Consider the following 87-residue polypeptide: MANSVQATKRARQAEKHRQHNAGMRAAMRTTVKKVLSAVEAGDKEAATAAFRVAQSSLDNMARKGLIAKNKAARNKSRINARIKAMA.

The disordered stretch occupies residues 1 to 27 (MANSVQATKRARQAEKHRQHNAGMRAA). Over residues 9–20 (KRARQAEKHRQH) the composition is skewed to basic residues.

Belongs to the bacterial ribosomal protein bS20 family.

In terms of biological role, binds directly to 16S ribosomal RNA. The protein is Small ribosomal subunit protein bS20 of Hydrogenovibrio crunogenus (strain DSM 25203 / XCL-2) (Thiomicrospira crunogena).